Reading from the N-terminus, the 91-residue chain is Small ribosomal subunit protein bS18 (91 aa).

The protein belongs to the bacterial ribosomal protein bS18 family. In terms of assembly, part of the 30S ribosomal subunit. Forms a tight heterodimer with protein bS6.

Binds as a heterodimer with protein bS6 to the central domain of the 16S rRNA, where it helps stabilize the platform of the 30S subunit. This chain is Small ribosomal subunit protein bS18, found in Thiobacillus denitrificans (strain ATCC 25259 / T1).